The chain runs to 358 residues: Phenylalanine--tRNA ligase alpha subunit (358 aa).

A Mg(2+)-binding site is contributed by Glu-262.

This sequence belongs to the class-II aminoacyl-tRNA synthetase family. Phe-tRNA synthetase alpha subunit type 1 subfamily. As to quaternary structure, tetramer of two alpha and two beta subunits. Mg(2+) is required as a cofactor.

The protein resides in the cytoplasm. The catalysed reaction is tRNA(Phe) + L-phenylalanine + ATP = L-phenylalanyl-tRNA(Phe) + AMP + diphosphate + H(+). The protein is Phenylalanine--tRNA ligase alpha subunit (pheS) of Streptomyces coelicolor (strain ATCC BAA-471 / A3(2) / M145).